Consider the following 253-residue polypeptide: MSPDTPRGGDLHPPEPDAAATAGPEGTPPDTEPAAEVIGVRHGMFGIRGTGDTSGYGRLVRPVTLPGGTAPPYGGWFDEVVDRLRTALENSGTPFGSALEKIVVFRGELTLHVRREHLVTVARLLRDDPALRFELCLGVNGVHYPDDAGRELHAVYPLRSITHNRLLRVETCAPDTDPHIPSLFEVYPTTDWHERETYDFFGILFDGHPSLTRITMPDDWRGHPQRKDYPLGGIPVEYKGARIPPPDERRAYS.

Disordered stretches follow at residues 1–33 and 234–253; these read MSPD…DTEP and IPVE…RAYS.

It belongs to the complex I 30 kDa subunit family. As to quaternary structure, NDH-1 is composed of 14 different subunits. Subunits NuoB, C, D, E, F, and G constitute the peripheral sector of the complex.

The protein resides in the cell membrane. It catalyses the reaction a quinone + NADH + 5 H(+)(in) = a quinol + NAD(+) + 4 H(+)(out). Its function is as follows. NDH-1 shuttles electrons from NADH, via FMN and iron-sulfur (Fe-S) centers, to quinones in the respiratory chain. The immediate electron acceptor for the enzyme in this species is believed to be a menaquinone. Couples the redox reaction to proton translocation (for every two electrons transferred, four hydrogen ions are translocated across the cytoplasmic membrane), and thus conserves the redox energy in a proton gradient. In Nocardia farcinica (strain IFM 10152), this protein is NADH-quinone oxidoreductase subunit C.